Reading from the N-terminus, the 380-residue chain is MQTLLDTAHCRLTLYRYPRQLQDPLQAWDAADEYLINTLAEEPLERDGPVIIMNDGFGALAAYLHGHAPVSVTDSHISEQATLANLAENGLDPHAIRLQDALASLPDAPALVVIKVSKYQALLEQQLLALRQVATPATRVIAAGKAKDIHSSTLALFEKYLGPTRTSLAWKKARLIHCTPVATPTERPALANPFPTVWPLEGTDMLIHNHANVFSRTSLDIGARFMLDNLPIHSARKVIDLGCGNGVLGLSLLARDAEVEVTFIDESHMAVASARLNVEHNLPAALPRTHFLVNNCLDGVAVGSVDRILCNPPFHQLQAITDHIAWQMFSDAHRVLPKGGELWIVGNRHLDYHNKLKRLFANAQVVASNSKFVILKAIKR.

This sequence belongs to the methyltransferase superfamily. RlmG family.

The protein resides in the cytoplasm. It carries out the reaction guanosine(1835) in 23S rRNA + S-adenosyl-L-methionine = N(2)-methylguanosine(1835) in 23S rRNA + S-adenosyl-L-homocysteine + H(+). Functionally, specifically methylates the guanine in position 1835 (m2G1835) of 23S rRNA. The polypeptide is Ribosomal RNA large subunit methyltransferase G (Aeromonas hydrophila subsp. hydrophila (strain ATCC 7966 / DSM 30187 / BCRC 13018 / CCUG 14551 / JCM 1027 / KCTC 2358 / NCIMB 9240 / NCTC 8049)).